Consider the following 1103-residue polypeptide: PH, RCC1 and FYVE domains-containing protein 1 (1103 aa).

One can recognise a PH domain in the interval 22–123 (KKGTQLLKYG…IWIGGLKTLI (102 aa)). The disordered stretch occupies residues 144 to 233 (DASRELTSSS…SSSHGSAADD (90 aa)). 2 stretches are compositionally biased toward low complexity: residues 151-169 (SSSP…SSPG) and 217-231 (SVSS…GSAA). 7 RCC1 repeats span residues 237–298 (LGDV…FVTR), 299–351 (QGEI…AVTL), 353–406 (GELY…LITS), 407–458 (YGRL…AVVE), 471–522 (SGKL…GLTT), 524–574 (GQVF…ALTS), and 575–626 (RNEV…AICL). An FYVE-type zinc finger spans residues 632–694 (GAEQSQCSTC…VCDSCYVKLS (63 aa)). The Zn(2+) site is built by cysteine 638, cysteine 641, cysteine 654, cysteine 657, cysteine 662, cysteine 665, cysteine 686, and cysteine 689. The segment at 783–818 (ATPKLAQAPSGISSRSVSPFSRRSSPPRSATPMPST) is disordered. Positions 791-818 (PSGISSRSVSPFSRRSSPPRSATPMPST) are enriched in low complexity. Residues 828 to 904 (ADNMKKTNEI…IAQLKDVAEK (77 aa)) are a coiled coil. The segment covering 962-979 (NLQSPKQTPRASERNSNA) has biased composition (polar residues). The interval 962-988 (NLQSPKQTPRASERNSNAYPADPRLSS) is disordered. In terms of domain architecture, BRX spans 1023–1078 (AEWIEQYEPGVYITLVALHDGTRDLRRVRFSRRRFGEHQAETWWSENREKVYEKYN). The tract at residues 1079–1103 (VRVSEKSTASQTHRDRDEEEEDIPH) is disordered.

As to expression, mostly expressed in flowers, and, to a lower extent, in stems, leaves, siliques, seeds.

Binds to phosphatidic acid and to phosphoinositides such as PtdIns3P, PtdIns(3,4)P(2), PtdIns(3,4,5)P(3) and PtdIns(4,5)P(2). Catalyzes guanine nucleotide exchange on specific Rab proteins. In Arabidopsis thaliana (Mouse-ear cress), this protein is PH, RCC1 and FYVE domains-containing protein 1.